The sequence spans 248 residues: Probable transcriptional regulatory protein NGR_c27950 (248 aa).

It belongs to the TACO1 family.

The protein resides in the cytoplasm. This is Probable transcriptional regulatory protein NGR_c27950 from Sinorhizobium fredii (strain NBRC 101917 / NGR234).